The chain runs to 82 residues: MDSITSAASVVAAGLAVGLAAIGPGIGQGTASGGAVEGIARQPEAEGKIRGTLLLSLAFMESLTIYGLVVALVLLFANPFAG.

Helical transmembrane passes span alanine 7–glycine 27 and leucine 57–alanine 77.

It belongs to the ATPase C chain family. F-type ATPases have 2 components, F(1) - the catalytic core - and F(0) - the membrane proton channel. F(1) has five subunits: alpha(3), beta(3), gamma(1), delta(1), epsilon(1). F(0) has four main subunits: a(1), b(1), b'(1) and c(10-14). The alpha and beta chains form an alternating ring which encloses part of the gamma chain. F(1) is attached to F(0) by a central stalk formed by the gamma and epsilon chains, while a peripheral stalk is formed by the delta, b and b' chains.

It is found in the cellular thylakoid membrane. Its function is as follows. F(1)F(0) ATP synthase produces ATP from ADP in the presence of a proton or sodium gradient. F-type ATPases consist of two structural domains, F(1) containing the extramembraneous catalytic core and F(0) containing the membrane proton channel, linked together by a central stalk and a peripheral stalk. During catalysis, ATP synthesis in the catalytic domain of F(1) is coupled via a rotary mechanism of the central stalk subunits to proton translocation. Functionally, key component of the F(0) channel; it plays a direct role in translocation across the membrane. A homomeric c-ring of between 10-14 subunits forms the central stalk rotor element with the F(1) delta and epsilon subunits. In Synechococcus sp. (strain RCC307), this protein is ATP synthase subunit c.